We begin with the raw amino-acid sequence, 422 residues long: UDP-N-acetylglucosamine 1-carboxyvinyltransferase (422 aa).

Phosphoenolpyruvate is bound at residue 22 to 23 (KN). R92 serves as a coordination point for UDP-N-acetyl-alpha-D-glucosamine. The active-site Proton donor is the C116. Position 116 is a 2-(S-cysteinyl)pyruvic acid O-phosphothioketal (C116). Residues 121–125 (RPVDQ), D307, and I329 each bind UDP-N-acetyl-alpha-D-glucosamine.

The protein belongs to the EPSP synthase family. MurA subfamily.

It is found in the cytoplasm. It catalyses the reaction phosphoenolpyruvate + UDP-N-acetyl-alpha-D-glucosamine = UDP-N-acetyl-3-O-(1-carboxyvinyl)-alpha-D-glucosamine + phosphate. It functions in the pathway cell wall biogenesis; peptidoglycan biosynthesis. Its function is as follows. Cell wall formation. Adds enolpyruvyl to UDP-N-acetylglucosamine. This is UDP-N-acetylglucosamine 1-carboxyvinyltransferase from Psychrobacter arcticus (strain DSM 17307 / VKM B-2377 / 273-4).